The sequence spans 1160 residues: ATP-dependent helicase/deoxyribonuclease subunit B (1160 aa).

Belongs to the helicase family. AddB/RexB type 2 subfamily. In terms of assembly, heterodimer of AddA and RexB. It depends on Mg(2+) as a cofactor.

Functionally, the heterodimer acts as both an ATP-dependent DNA helicase and an ATP-dependent, dual-direction single-stranded exonuclease. Recognizes the chi site generating a DNA molecule suitable for the initiation of homologous recombination. This subunit has 5' -&gt; 3' nuclease activity but not helicase activity. The chain is ATP-dependent helicase/deoxyribonuclease subunit B from Lactobacillus helveticus (strain DPC 4571).